The primary structure comprises 104 residues: Large ribosomal subunit protein uL24 (104 aa).

Belongs to the universal ribosomal protein uL24 family. Part of the 50S ribosomal subunit.

Its function is as follows. One of two assembly initiator proteins, it binds directly to the 5'-end of the 23S rRNA, where it nucleates assembly of the 50S subunit. In terms of biological role, one of the proteins that surrounds the polypeptide exit tunnel on the outside of the subunit. The polypeptide is Large ribosomal subunit protein uL24 (Corynebacterium diphtheriae (strain ATCC 700971 / NCTC 13129 / Biotype gravis)).